The chain runs to 286 residues: Sulfur carrier protein FdhD (286 aa).

Catalysis depends on Cys110, which acts as the Cysteine persulfide intermediate. 247–252 contributes to the Mo-bis(molybdopterin guanine dinucleotide) binding site; that stretch reads FARGEK.

The protein belongs to the FdhD family.

The protein resides in the cytoplasm. In terms of biological role, required for formate dehydrogenase (FDH) activity. Acts as a sulfur carrier protein that transfers sulfur from IscS to the molybdenum cofactor prior to its insertion into FDH. This chain is Sulfur carrier protein FdhD, found in Wolinella succinogenes (strain ATCC 29543 / DSM 1740 / CCUG 13145 / JCM 31913 / LMG 7466 / NCTC 11488 / FDC 602W) (Vibrio succinogenes).